Reading from the N-terminus, the 216-residue chain is ATP synthase subunit a (216 aa).

7 consecutive transmembrane segments (helical) span residues methionine 1 to leucine 21, leucine 62 to phenylalanine 82, asparagine 88 to phenylalanine 108, phenylalanine 119 to isoleucine 139, leucine 149 to lysine 169, leucine 174 to isoleucine 194, and threonine 196 to histidine 216.

The protein belongs to the ATPase A chain family. In terms of assembly, F-type ATPases have 2 components, CF(1) - the catalytic core - and CF(0) - the membrane proton channel. CF(1) has five subunits: alpha(3), beta(3), gamma(1), delta(1), epsilon(1). CF(0) has three main subunits: a(1), b(2) and c(9-12). The alpha and beta chains form an alternating ring which encloses part of the gamma chain. CF(1) is attached to CF(0) by a central stalk formed by the gamma and epsilon chains, while a peripheral stalk is formed by the delta and b chains.

The protein resides in the cell inner membrane. In terms of biological role, key component of the proton channel; it plays a direct role in the translocation of protons across the membrane. The polypeptide is ATP synthase subunit a (Aquifex aeolicus (strain VF5)).